The following is a 100-amino-acid chain: Small ribosomal subunit protein uS14c (100 aa).

The protein belongs to the universal ribosomal protein uS14 family. As to quaternary structure, part of the 30S ribosomal subunit.

Its subcellular location is the plastid. It localises to the chloroplast. Functionally, binds 16S rRNA, required for the assembly of 30S particles. The chain is Small ribosomal subunit protein uS14c from Emiliania huxleyi (Coccolithophore).